A 50-amino-acid chain; its full sequence is Omega-conotoxin Bu8 (50 aa).

Alanine 1 is a signal peptide. A propeptide spanning residues 2 to 24 is cleaved from the precursor; sequence EDSRGTQLHRALRKATKLSESTR. Disulfide bonds link cysteine 25–cysteine 40, cysteine 32–cysteine 44, and cysteine 39–cysteine 49. Cysteine 49 is modified (cysteine amide).

The protein belongs to the conotoxin O1 superfamily. Expressed by the venom duct.

Its subcellular location is the secreted. Its function is as follows. Omega-conotoxins act at presynaptic membranes, they bind and block voltage-gated calcium channels (Cav). This toxin selectively and potently inhibits depolarization-activated rat Cav2.2/CACNA1B currents (IC(50)=89 nM), when coexpressed with alpha-2/delta-1 (CACNA2D1) and beta-3 (CACNB3) subunits. In vivo, is lethal to fish and displays potent analgesic activity in mice pain models of hot plate and acetic acid writhing but has fewer side effects on mouse motor function and lower toxicity in goldfish. Shows higher or similar analgesic activity in the pain models mentioned above compared to MVIIA, and lower side effects. In addition, it blocks Cav2.2/CACNA1B more rapidly than MVIIA and also dissociates more rapidly. This Conus bullatus (Bubble cone) protein is Omega-conotoxin Bu8.